Reading from the N-terminus, the 129-residue chain is MDPQTALSRALLLLLFLHLSLLGCRSHPVGGPGPVSELPGLQELLDRLRDRVSELQAEQLRVEPLQQGQGLEETWDSPAAAPAGFLGPHHSILRALRGPKMMRDSGCFGRRLDRIGSLSGLGCNVLRRY.

Residues 1-26 form the signal peptide; the sequence is MDPQTALSRALLLLLFLHLSLLGCRS. A disulfide bridge links Cys-107 with Cys-123.

It belongs to the natriuretic peptide family. The precursor molecule is proteolytically cleaved, possibly by FURIN or CORIN, to produce the active peptide. May undergo further proteolytic cleavage by various proteases such as DPP4, MME and possibly FAP, to give rise to a variety of shorter peptides. May be cleaved at Pro-99 by the prolyl endopeptidase FAP (seprase) activity (in vitro). May be degraded by IDE. During IDE degradation, the resulting products initially increase the activation of NPR1 and can also stimulate NPR2 to produce cGMP before the fragments are completely degraded and inactivated by IDE (in vitro).

It localises to the secreted. Cardiac hormone that plays a key role in mediating cardio-renal homeostasis. May also function as a paracrine antifibrotic factor in the heart. Acts by specifically binding and stimulating NPR1 to produce cGMP, which in turn activates effector proteins that drive various biological responses. Involved in regulating the extracellular fluid volume and maintaining the fluid-electrolyte balance through natriuresis, diuresis, vasorelaxation, and inhibition of renin and aldosterone secretion. Binds the clearance receptor NPR3. In Bos taurus (Bovine), this protein is Natriuretic peptides B (NPPB).